The primary structure comprises 883 residues: Translation initiation factor IF-2 (883 aa).

Residues 32 to 45 (NDLNGKNNSNSSIN) are compositionally biased toward polar residues. Disordered regions lie at residues 32–216 (NDLN…QNKY) and 251–275 (RKLGEKKKQQQESQKSYKRKKAETE). Residues 46–62 (LDKHNNKVEYSQNRDNR) are compositionally biased toward basic and acidic residues. Polar residues predominate over residues 75–216 (GGYSQNRDNR…VGKNTSQNKY (142 aa)). A compositionally biased stretch (basic and acidic residues) spans 251 to 260 (RKLGEKKKQQ). Residues 381–554 (EKPPVITIMG…DMMLLKANPS (174 aa)) form the tr-type G domain. Residues 390 to 397 (GHVDHGKT) are G1. Position 390–397 (390–397 (GHVDHGKT)) interacts with GTP. The segment at 415-419 (GITQH) is G2. A G3 region spans residues 436-439 (DTPG). Residues 436-440 (DTPGH) and 490-493 (NKID) each bind GTP. A G4 region spans residues 490–493 (NKID). The G5 stretch occupies residues 526-528 (SAL).

It belongs to the TRAFAC class translation factor GTPase superfamily. Classic translation factor GTPase family. IF-2 subfamily.

It localises to the cytoplasm. In terms of biological role, one of the essential components for the initiation of protein synthesis. Protects formylmethionyl-tRNA from spontaneous hydrolysis and promotes its binding to the 30S ribosomal subunits. Also involved in the hydrolysis of GTP during the formation of the 70S ribosomal complex. The sequence is that of Translation initiation factor IF-2 from Borrelia garinii subsp. bavariensis (strain ATCC BAA-2496 / DSM 23469 / PBi) (Borreliella bavariensis).